The primary structure comprises 101 residues: Gamma-secretase subunit PEN-2 (101 aa).

Residues 1-17 (MNLERIPNEEKLSLCRR) are Cytoplasmic-facing. The segment at residues 18-36 (YYLGGFAFLPFLWLVNILW) is an intramembrane region (helical). At 37–57 (FFKEAFLKPAYTEQPQIKSYV) the chain is on the cytoplasmic side. Residues 58–78 (KKSALGLLLWVAVLTTWITVF) form a helical membrane-spanning segment. Over 79 to 101 (QHFRAQWGEVGDYLSFTIPLGTA) the chain is Lumenal.

Belongs to the PEN-2 family. In terms of assembly, the functional gamma-secretase complex is composed of at least four polypeptides: a presenilin homodimer (psen1 or psen2), nicastrin (ncstn), aph1 (aph1a or aph1b) and psenen.

Its subcellular location is the endoplasmic reticulum membrane. It localises to the golgi apparatus. It is found in the golgi stack membrane. The protein resides in the cell membrane. The protein localises to the membrane. Essential subunit of the gamma-secretase complex, an endoprotease complex that catalyzes the intramembrane cleavage of integral membrane proteins such as Notch receptors and APP (amyloid-beta precursor protein). The gamma-secretase complex plays a role in Notch and Wnt signaling cascades and regulation of downstream processes via its role in processing key regulatory proteins. The polypeptide is Gamma-secretase subunit PEN-2 (psenen) (Danio rerio (Zebrafish)).